A 109-amino-acid polypeptide reads, in one-letter code: uncharacterized protein (109 aa).

To M.jannaschii MJ1244 and MJ1245 and M.thermoautotrophicum MTH1110.

This is an uncharacterized protein from Methanococcus maripaludis (Methanococcus deltae).